The sequence spans 278 residues: Probable ribosomal RNA small subunit methyltransferase A (278 aa).

His25, Met27, Gly52, Glu73, Asp98, and Asn114 together coordinate S-adenosyl-L-methionine.

The protein belongs to the class I-like SAM-binding methyltransferase superfamily. rRNA adenine N(6)-methyltransferase family. RsmA subfamily.

It localises to the cytoplasm. In terms of biological role, specifically dimethylates two adjacent adenosines in the loop of a conserved hairpin near the 3'-end of 16S rRNA in the 30S particle. May play a critical role in biogenesis of 30S subunits. The polypeptide is Probable ribosomal RNA small subunit methyltransferase A (Methanopyrus kandleri (strain AV19 / DSM 6324 / JCM 9639 / NBRC 100938)).